The primary structure comprises 267 residues: Hydroxyethylthiazole kinase (267 aa).

Position 46 (M46) interacts with substrate. Residues R122 and T168 each contribute to the ATP site. G195 contributes to the substrate binding site.

This sequence belongs to the Thz kinase family. The cofactor is Mg(2+).

It catalyses the reaction 5-(2-hydroxyethyl)-4-methylthiazole + ATP = 4-methyl-5-(2-phosphooxyethyl)-thiazole + ADP + H(+). The protein operates within cofactor biosynthesis; thiamine diphosphate biosynthesis; 4-methyl-5-(2-phosphoethyl)-thiazole from 5-(2-hydroxyethyl)-4-methylthiazole: step 1/1. Catalyzes the phosphorylation of the hydroxyl group of 4-methyl-5-beta-hydroxyethylthiazole (THZ). In Moorella thermoacetica (strain ATCC 39073 / JCM 9320), this protein is Hydroxyethylthiazole kinase.